Here is a 169-residue protein sequence, read N- to C-terminus: E1B protein, small T-antigen (169 aa).

Belongs to the adenoviridae E1B 19 kDa protein family.

This chain is E1B protein, small T-antigen, found in Canis lupus familiaris (Dog).